The sequence spans 111 residues: Iron-sulfur cluster insertion protein ErpA (111 aa).

Iron-sulfur cluster-binding residues include Cys-39, Cys-103, and Cys-105.

Belongs to the HesB/IscA family. Homodimer. Iron-sulfur cluster is required as a cofactor.

Its function is as follows. Required for insertion of 4Fe-4S clusters for at least IspG. The sequence is that of Iron-sulfur cluster insertion protein ErpA from Acinetobacter baumannii (strain AB307-0294).